We begin with the raw amino-acid sequence, 92 residues long: Small ribosomal subunit protein uS19 (92 aa).

This sequence belongs to the universal ribosomal protein uS19 family.

Functionally, protein S19 forms a complex with S13 that binds strongly to the 16S ribosomal RNA. This is Small ribosomal subunit protein uS19 from Limosilactobacillus reuteri (strain DSM 20016) (Lactobacillus reuteri).